The following is a 459-amino-acid chain: Phosphoglucosamine mutase (459 aa).

S105 (phosphoserine intermediate) is an active-site residue. Mg(2+)-binding residues include S105, D252, D254, and D256. Residue S105 is modified to Phosphoserine.

This sequence belongs to the phosphohexose mutase family. Mg(2+) is required as a cofactor. Activated by phosphorylation.

It catalyses the reaction alpha-D-glucosamine 1-phosphate = D-glucosamine 6-phosphate. Its function is as follows. Catalyzes the conversion of glucosamine-6-phosphate to glucosamine-1-phosphate. This Bifidobacterium adolescentis (strain ATCC 15703 / DSM 20083 / NCTC 11814 / E194a) protein is Phosphoglucosamine mutase.